A 462-amino-acid chain; its full sequence is MRLLDSVAKEKIKLDKKDISIYLCGPTVYDDAHLGHARSSVCFDLLRRVLLANGNRVKFARNYTDIDDKILKKMAQSGQTLEEITEFYIKSYEEDMRVLNVLDPDFKPRATHYITAMLDLIKKLAKDGFVYTLEDGIYFDTSKDEKYLSLSNRNLEENISRLSNEVQKRNESDFVLWKFDENFYESEFGKGRPGWHTECVAMIDSIFENTLDIHAGGIDLLFPHHENEAAQCRCGCKRKLANIWLHNGFVKIDGEKMSKSLNNSFFIKDALKEFMGEALRFYLLSSHYRSHFNYSLSDLENAKKRLDKFYRLKKRLDLGEISDFDVLNDIEIKSEIAKQILEILNDDLNISKALALLDDFISSANLELDKESKNKILKQNIKEALSELAKIFGFGFMDTTLYFQWGVSKEEREEIEKLILERTEAKKNKDFNTADAIRERLSSKKITLLDTPNGTIWEKINA.

Residue cysteine 24 participates in Zn(2+) binding. The 'HIGH' region signature appears at 26–36 (PTVYDDAHLGH). Zn(2+) is bound by residues cysteine 199, histidine 224, and glutamate 228. The 'KMSKS' region signature appears at 256 to 260 (KMSKS). Lysine 259 is a binding site for ATP.

It belongs to the class-I aminoacyl-tRNA synthetase family. Monomer. Requires Zn(2+) as cofactor.

It localises to the cytoplasm. The enzyme catalyses tRNA(Cys) + L-cysteine + ATP = L-cysteinyl-tRNA(Cys) + AMP + diphosphate. This is Cysteine--tRNA ligase from Campylobacter jejuni subsp. jejuni serotype O:6 (strain 81116 / NCTC 11828).